Reading from the N-terminus, the 337-residue chain is tRNA N6-adenosine threonylcarbamoyltransferase (337 aa).

Fe cation contacts are provided by His111 and His115. Residues Leu134 to Gly138, Asp167, Gly180, and Asn272 contribute to the substrate site. Asp300 lines the Fe cation pocket.

Belongs to the KAE1 / TsaD family. The cofactor is Fe(2+).

The protein localises to the cytoplasm. It catalyses the reaction L-threonylcarbamoyladenylate + adenosine(37) in tRNA = N(6)-L-threonylcarbamoyladenosine(37) in tRNA + AMP + H(+). Functionally, required for the formation of a threonylcarbamoyl group on adenosine at position 37 (t(6)A37) in tRNAs that read codons beginning with adenine. Is involved in the transfer of the threonylcarbamoyl moiety of threonylcarbamoyl-AMP (TC-AMP) to the N6 group of A37, together with TsaE and TsaB. TsaD likely plays a direct catalytic role in this reaction. This chain is tRNA N6-adenosine threonylcarbamoyltransferase, found in Aeromonas salmonicida (strain A449).